The chain runs to 235 residues: Glucosamine-6-phosphate deaminase (235 aa).

Residue D62 is the Proton acceptor; for enolization step of the active site. The For ring-opening step role is filled by N128. H130 (proton acceptor; for ring-opening step) is an active-site residue. The For ring-opening step role is filled by E135.

It belongs to the glucosamine/galactosamine-6-phosphate isomerase family. NagB subfamily.

It catalyses the reaction alpha-D-glucosamine 6-phosphate + H2O = beta-D-fructose 6-phosphate + NH4(+). Its pathway is amino-sugar metabolism; N-acetylneuraminate degradation; D-fructose 6-phosphate from N-acetylneuraminate: step 5/5. Catalyzes the reversible isomerization-deamination of glucosamine 6-phosphate (GlcN6P) to form fructose 6-phosphate (Fru6P) and ammonium ion. The sequence is that of Glucosamine-6-phosphate deaminase from Lactococcus lactis subsp. cremoris (strain SK11).